Here is a 212-residue protein sequence, read N- to C-terminus: Putative 3-methyladenine DNA glycosylase (212 aa).

Belongs to the DNA glycosylase MPG family.

This Frankia casuarinae (strain DSM 45818 / CECT 9043 / HFP020203 / CcI3) protein is Putative 3-methyladenine DNA glycosylase.